A 363-amino-acid polypeptide reads, in one-letter code: Phospho-N-acetylmuramoyl-pentapeptide-transferase (363 aa).

Transmembrane regions (helical) follow at residues 13 to 33, 49 to 69, 95 to 115, 119 to 139, 154 to 174, 183 to 203, 224 to 244, 281 to 301, and 343 to 363; these read ISGI…AFFL, LPLL…IPLL, MGGI…SNFA, LAVS…DWQI, LALQ…NQPS, WVSF…FVLV, AIAL…LMVF, AVAL…IFFV, and ELQV…ICLA.

It belongs to the glycosyltransferase 4 family. MraY subfamily. Mg(2+) serves as cofactor.

Its subcellular location is the cell inner membrane. It carries out the reaction UDP-N-acetyl-alpha-D-muramoyl-L-alanyl-gamma-D-glutamyl-meso-2,6-diaminopimeloyl-D-alanyl-D-alanine + di-trans,octa-cis-undecaprenyl phosphate = di-trans,octa-cis-undecaprenyl diphospho-N-acetyl-alpha-D-muramoyl-L-alanyl-D-glutamyl-meso-2,6-diaminopimeloyl-D-alanyl-D-alanine + UMP. It participates in cell wall biogenesis; peptidoglycan biosynthesis. Functionally, catalyzes the initial step of the lipid cycle reactions in the biosynthesis of the cell wall peptidoglycan: transfers peptidoglycan precursor phospho-MurNAc-pentapeptide from UDP-MurNAc-pentapeptide onto the lipid carrier undecaprenyl phosphate, yielding undecaprenyl-pyrophosphoryl-MurNAc-pentapeptide, known as lipid I. This Nostoc punctiforme (strain ATCC 29133 / PCC 73102) protein is Phospho-N-acetylmuramoyl-pentapeptide-transferase.